Reading from the N-terminus, the 699-residue chain is DNA topoisomerase 1 (699 aa).

2 stretches are compositionally biased toward basic and acidic residues: residues 1 to 15 and 22 to 35; these read MAKS…KNEL and IELK…ESKG. The interval 1-37 is disordered; that stretch reads MAKSKVVEKDKKNELDNQSADIELKGQSKNEESKGGK. A Toprim domain is found at 38 to 146; that stretch reads KKVIIVESPA…NIITFTEITE (109 aa). Positions 44 and 115 each coordinate Mg(2+). Residues 160–583 form the Topo IA-type catalytic domain; that stretch reads DMNKVNAQLA…SFLKEFNKDL (424 aa). The interval 194–199 is interaction with DNA; the sequence is SAGRVQ. Residue Tyr-324 is the O-(5'-phospho-DNA)-tyrosine intermediate of the active site. The segment at 601 to 624 adopts a C4-type zinc-finger fold; sequence CEDCSGNYKLKVGKYGLYLHCPNC. Residues 649–699 form a disordered region; sequence QESQEENGEKNSVQSEESSANSGNRKFYRKRRTSGSKKSSTKSASSKAKKK. A compositionally biased stretch (polar residues) spans 661–672; sequence VQSEESSANSGN. The segment covering 674 to 683 has biased composition (basic residues); the sequence is KFYRKRRTSG. Over residues 684–699 the composition is skewed to low complexity; sequence SKKSSTKSASSKAKKK.

Belongs to the type IA topoisomerase family. As to quaternary structure, monomer. The cofactor is Mg(2+).

It catalyses the reaction ATP-independent breakage of single-stranded DNA, followed by passage and rejoining.. Functionally, releases the supercoiling and torsional tension of DNA, which is introduced during the DNA replication and transcription, by transiently cleaving and rejoining one strand of the DNA duplex. Introduces a single-strand break via transesterification at a target site in duplex DNA. The scissile phosphodiester is attacked by the catalytic tyrosine of the enzyme, resulting in the formation of a DNA-(5'-phosphotyrosyl)-enzyme intermediate and the expulsion of a 3'-OH DNA strand. The free DNA strand then undergoes passage around the unbroken strand, thus removing DNA supercoils. Finally, in the religation step, the DNA 3'-OH attacks the covalent intermediate to expel the active-site tyrosine and restore the DNA phosphodiester backbone. The protein is DNA topoisomerase 1 of Fervidobacterium islandicum.